Here is a 369-residue protein sequence, read N- to C-terminus: UDP-N-acetylglucosamine--N-acetylmuramyl-(pentapeptide) pyrophosphoryl-undecaprenol N-acetylglucosamine transferase (369 aa).

Residues Thr10 to Gly12, Asn124, Arg161, Ser195, and Gln295 each bind UDP-N-acetyl-alpha-D-glucosamine.

Belongs to the glycosyltransferase 28 family. MurG subfamily.

It localises to the cell membrane. The catalysed reaction is di-trans,octa-cis-undecaprenyl diphospho-N-acetyl-alpha-D-muramoyl-L-alanyl-D-glutamyl-meso-2,6-diaminopimeloyl-D-alanyl-D-alanine + UDP-N-acetyl-alpha-D-glucosamine = di-trans,octa-cis-undecaprenyl diphospho-[N-acetyl-alpha-D-glucosaminyl-(1-&gt;4)]-N-acetyl-alpha-D-muramoyl-L-alanyl-D-glutamyl-meso-2,6-diaminopimeloyl-D-alanyl-D-alanine + UDP + H(+). It functions in the pathway cell wall biogenesis; peptidoglycan biosynthesis. Cell wall formation. Catalyzes the transfer of a GlcNAc subunit on undecaprenyl-pyrophosphoryl-MurNAc-pentapeptide (lipid intermediate I) to form undecaprenyl-pyrophosphoryl-MurNAc-(pentapeptide)GlcNAc (lipid intermediate II). The polypeptide is UDP-N-acetylglucosamine--N-acetylmuramyl-(pentapeptide) pyrophosphoryl-undecaprenol N-acetylglucosamine transferase (Acidothermus cellulolyticus (strain ATCC 43068 / DSM 8971 / 11B)).